A 291-amino-acid chain; its full sequence is Malectin (291 aa).

The N-terminal stretch at 1-30 (MLRPRGAEGTAVALLRLLLLLLLLGPKLRG) is a signal peptide. Residues 31-268 (PGLGVVGAAG…TPNPYASDNS (238 aa)) are Lumenal-facing. Tyr-81, Tyr-103, Tyr-130, Phe-131, and Asp-200 together coordinate a carbohydrate. A disordered region spans residues 220-264 (LQPHPGLEKKEEEEEEEEYDEGSNLKRQTNKNRVQSGPRTPNPYA). The segment covering 230 to 240 (EEEEEEEEYDE) has biased composition (acidic residues). Polar residues predominate over residues 244 to 264 (LKRQTNKNRVQSGPRTPNPYA). A glycan (N-linked (GlcNAc...) asparagine) is linked at Asn-267. Residues 269 to 289 (SLMFPILVAFGVFIPTLFCLC) traverse the membrane as a helical segment. The Cytoplasmic portion of the chain corresponds to 290-291 (RL).

This sequence belongs to the malectin family. In terms of assembly, interacts with the oligosaccharyltransferase (OST) complex.

The protein localises to the endoplasmic reticulum membrane. Carbohydrate-binding protein with a strong ligand preference for Glc2-N-glycan. May play a role in the early steps of protein N-glycosylation. This chain is Malectin, found in Mus musculus (Mouse).